We begin with the raw amino-acid sequence, 388 residues long: Staphopain A (388 aa).

The signal sequence occupies residues Met-1–Ala-25. Residues Glu-26–Thr-214 constitute a propeptide that is removed on maturation. Catalysis depends on residues Cys-238, His-334, and Asn-355.

The protein belongs to the peptidase C47 family. In terms of assembly, in the cytoplasm, prematurely activated/folded ScpA forms a stable non-covalent complex with ScpB. Post-translationally, cleavage leads to the activation of ScpA probably by an auto-catalytic manner.

It is found in the secreted. The enzyme catalyses Broad endopeptidase action on proteins including elastin, but rather limited hydrolysis of small-molecule substrates. Assays are conveniently made with hemoglobin, casein or Z-Phe-Arg-NHMec as substrate.. Prematurely activated/folded staphopain A is inhibited by staphostatin A (ScpB), which is probably required to protect staphylococcal cytoplasmic proteins from degradation by ScpA. Its function is as follows. Cysteine protease that plays an important role in the inhibition of host innate immune response. Cleaves host elastins found in connective tissues, pulmonary surfactant protein A in the lungs, and the chemokine receptor CXCR2 on leukocytes. Proteolytic cleavage of surfactant protein A impairs bacterial phagocytosis by neutrophils while CXCR2 degradation blocks neutrophil activation and chemotaxis. Additionally, promotes vascular leakage by activating the plasma kallikerin/kinin system, resulting in hypotension. This is Staphopain A (sspP) from Staphylococcus aureus (strain MRSA252).